The following is an 867-amino-acid chain: Alanine--tRNA ligase (867 aa).

Zn(2+) contacts are provided by histidine 559, histidine 563, cysteine 661, and histidine 665.

The protein belongs to the class-II aminoacyl-tRNA synthetase family. Zn(2+) serves as cofactor.

Its subcellular location is the cytoplasm. It carries out the reaction tRNA(Ala) + L-alanine + ATP = L-alanyl-tRNA(Ala) + AMP + diphosphate. Functionally, catalyzes the attachment of alanine to tRNA(Ala) in a two-step reaction: alanine is first activated by ATP to form Ala-AMP and then transferred to the acceptor end of tRNA(Ala). Also edits incorrectly charged Ser-tRNA(Ala) and Gly-tRNA(Ala) via its editing domain. The protein is Alanine--tRNA ligase of Aquifex aeolicus (strain VF5).